The following is a 136-amino-acid chain: Small ribosomal subunit protein uS8c (136 aa).

Belongs to the universal ribosomal protein uS8 family. In terms of assembly, part of the 30S ribosomal subunit.

Its subcellular location is the plastid. It localises to the chloroplast. One of the primary rRNA binding proteins, it binds directly to 16S rRNA central domain where it helps coordinate assembly of the platform of the 30S subunit. The chain is Small ribosomal subunit protein uS8c (rps8) from Morus indica (Mulberry).